Here is a 270-residue protein sequence, read N- to C-terminus: uncharacterized protein (270 aa).

This is an uncharacterized protein from Aquifex aeolicus (strain VF5).